Consider the following 359-residue polypeptide: Peptide chain release factor 1 (359 aa).

At Gln-234 the chain carries N5-methylglutamine. Residues 283-305 (SQKDAARAADRRAQVGSGDRSER) are disordered.

The protein belongs to the prokaryotic/mitochondrial release factor family. Methylated by PrmC. Methylation increases the termination efficiency of RF1.

It is found in the cytoplasm. Its function is as follows. Peptide chain release factor 1 directs the termination of translation in response to the peptide chain termination codons UAG and UAA. This is Peptide chain release factor 1 from Methylobacterium nodulans (strain LMG 21967 / CNCM I-2342 / ORS 2060).